The chain runs to 221 residues: MEKSEATTIEIGETSRESKGKTPLLAEVEQTARTAGSYRRGVAIFDLILRVSAATSALAATITMGTTEQTLPFFTQFFQFQASYDDLPAFTFFVIALSIVTGYLVLSVPFSVVCIAQPLAAVPRLLLIVCDTLTVTLATAAASSSAAIVYLAHNGNADANWLAICQQFGDFCQRVSGGGGGVVRGGGSAHIHGGALRSRPEETLTDGVDVIHYWDRRWCEI.

The interval 1 to 21 (MEKSEATTIEIGETSRESKGK) is disordered. The Cytoplasmic portion of the chain corresponds to 1-41 (MEKSEATTIEIGETSRESKGKTPLLAEVEQTARTAGSYRRG). The chain crosses the membrane as a helical span at residues 42 to 62 (VAIFDLILRVSAATSALAATI). At 63-89 (TMGTTEQTLPFFTQFFQFQASYDDLPA) the chain is on the extracellular side. A helical membrane pass occupies residues 90–110 (FTFFVIALSIVTGYLVLSVPF). Topologically, residues 111 to 131 (SVVCIAQPLAAVPRLLLIVCD) are cytoplasmic. Residues 132–152 (TLTVTLATAAASSSAAIVYLA) form a helical membrane-spanning segment. The Extracellular segment spans residues 153–221 (HNGNADANWL…HYWDRRWCEI (69 aa)).

It belongs to the Casparian strip membrane proteins (CASP) family. In terms of assembly, homodimer and heterodimers.

The protein localises to the cell membrane. Regulates membrane-cell wall junctions and localized cell wall deposition. Required for establishment of the Casparian strip membrane domain (CSD) and the subsequent formation of Casparian strips, a cell wall modification of the root endodermis that determines an apoplastic barrier between the intraorganismal apoplasm and the extraorganismal apoplasm and prevents lateral diffusion. The polypeptide is Casparian strip membrane protein 2 (Erythranthe guttata (Yellow monkey flower)).